The sequence spans 108 residues: Nucleoid-associated protein Avin_19840 (108 aa).

This sequence belongs to the YbaB/EbfC family. In terms of assembly, homodimer.

The protein resides in the cytoplasm. It is found in the nucleoid. Its function is as follows. Binds to DNA and alters its conformation. May be involved in regulation of gene expression, nucleoid organization and DNA protection. This chain is Nucleoid-associated protein Avin_19840, found in Azotobacter vinelandii (strain DJ / ATCC BAA-1303).